A 170-amino-acid polypeptide reads, in one-letter code: Der GTPase-activating protein YihI (170 aa).

2 disordered regions span residues 1–96 and 145–170; these read MKKP…LSPQ and LSYD…RGGN. Over residues 20–30 the composition is skewed to basic and acidic residues; that stretch reads TREELNQEARD. A compositionally biased stretch (basic residues) spans 31 to 40; sequence RKRLKKHRGH. A compositionally biased stretch (acidic residues) spans 147-159; it reads YDDEEDEEEDEKQ.

Belongs to the YihI family. Interacts with Der.

Its function is as follows. A GTPase-activating protein (GAP) that modifies Der/EngA GTPase function. May play a role in ribosome biogenesis. This chain is Der GTPase-activating protein YihI, found in Salmonella arizonae (strain ATCC BAA-731 / CDC346-86 / RSK2980).